We begin with the raw amino-acid sequence, 122 residues long: Small ribosomal subunit protein uS13 (122 aa).

The interval 95-122 (QLPVRGQRTHTNARTRKGKAKPIAGKKK) is disordered.

It belongs to the universal ribosomal protein uS13 family. In terms of assembly, part of the 30S ribosomal subunit. Forms a loose heterodimer with protein S19. Forms two bridges to the 50S subunit in the 70S ribosome.

Located at the top of the head of the 30S subunit, it contacts several helices of the 16S rRNA. In the 70S ribosome it contacts the 23S rRNA (bridge B1a) and protein L5 of the 50S subunit (bridge B1b), connecting the 2 subunits; these bridges are implicated in subunit movement. Contacts the tRNAs in the A and P-sites. The sequence is that of Small ribosomal subunit protein uS13 from Beijerinckia indica subsp. indica (strain ATCC 9039 / DSM 1715 / NCIMB 8712).